The chain runs to 407 residues: Na(+)-translocating NADH-quinone reductase subunit F (407 aa).

Residues 3-23 form a helical membrane-spanning segment; it reads IILGVVMFTLIVLALVLVILF. Residues 32-126 form the 2Fe-2S ferredoxin-type domain; that stretch reads GDITISINGD…DMDIELPEEI (95 aa). [2Fe-2S] cluster is bound by residues Cys69, Cys75, Cys78, and Cys110. The 141-residue stretch at 129 to 269 folds into the FAD-binding FR-type domain; the sequence is VKKWECTVIS…SGPFGEFFAK (141 aa). The tract at residues 272–389 is catalytic; that stretch reads DAEMVFIGGG…PMMNAAVIGM (118 aa).

Belongs to the NqrF family. In terms of assembly, composed of six subunits; NqrA, NqrB, NqrC, NqrD, NqrE and NqrF. [2Fe-2S] cluster is required as a cofactor. It depends on FAD as a cofactor.

The protein localises to the cell inner membrane. It catalyses the reaction a ubiquinone + n Na(+)(in) + NADH + H(+) = a ubiquinol + n Na(+)(out) + NAD(+). NQR complex catalyzes the reduction of ubiquinone-1 to ubiquinol by two successive reactions, coupled with the transport of Na(+) ions from the cytoplasm to the periplasm. The first step is catalyzed by NqrF, which accepts electrons from NADH and reduces ubiquinone-1 to ubisemiquinone by a one-electron transfer pathway. This Vibrio anguillarum (Listonella anguillarum) protein is Na(+)-translocating NADH-quinone reductase subunit F.